The primary structure comprises 835 residues: Pre-mRNA-processing protein 40C (835 aa).

Over residues 1 to 20 (MEGENTTDPPYTTAASSGQS) the composition is skewed to polar residues. A disordered region spans residues 1-22 (MEGENTTDPPYTTAASSGQSIF). WW domains lie at 243–276 (GNRLDAWTAHKSEAGVLYYYNSVTGQSTYEKPPG) and 295–328 (SLPGTDWALVSTNDGKKYYYNNKTKVSSWQIPAE). Residues 397–459 (SGMPVSSTIT…DSGPSKEECS (63 aa)) are disordered. Polar residues predominate over residues 400 to 428 (PVSSTITSEANSGKTTEVTPSGESGNSTG). 3 consecutive FF domains span residues 455–509 (KEEC…YVKT), 519–577 (RAAH…RVLS), and 590–643 (RAAA…YIAE). 2 disordered regions span residues 649–677 (RGDDHEMKARDEEDKLRERERELRKRKER) and 714–738 (TESKPILERDPQKRASNPDLEPADK). 2 FF domains span residues 691 to 748 (RKEA…HVKS) and 750 to 815 (YERC…YVED).

It belongs to the PRPF40 family. As to quaternary structure, interacts (via the WW domains) with the phosphorylated C-terminal domain of NRPB1 (via CTD domain). As to expression, expressed in roots, shoots, rosette leaves, cauline leaves, stems and flowers.

The protein localises to the nucleus. Binds the phosphorylated C-terminal domain (CTD) of the largest subunit of RNA polymerase II and functions as a scaffold for RNA processing machineries. May be involved in pre-mRNA splicing. The polypeptide is Pre-mRNA-processing protein 40C (Arabidopsis thaliana (Mouse-ear cress)).